The sequence spans 5628 residues: Polyketide synthase ThaG (5628 aa).

The Ketosynthase family 3 (KS3) 1 domain maps to 13–448 (HDDIAVIGIA…GTNAHVVLRE (436 aa)). Catalysis depends on for beta-ketoacyl synthase 1 activity residues C184, H319, and H361. 2 disordered regions span residues 552-613 (GNLV…DGPT) and 1156-1183 (ASPG…RAEA). Over residues 559-589 (GPHDEQADHDGSGEHGEHGERARAGADDLSR) the composition is skewed to basic and acidic residues. Low complexity predominate over residues 1156–1173 (ASPGAASSGAAAPNAASD). The segment covering 1174–1183 (ASRDTERAEA) has biased composition (basic and acidic residues). The 78-residue stretch at 1209 to 1286 (AHGSARLPAL…RLAGHLATRL (78 aa)) folds into the Carrier 1 domain. Residue S1246 is modified to O-(pantetheine 4'-phosphoryl)serine. The region spanning 1373 to 1781 (YEPIAIVGMS…GTNAHVIVEA (409 aa)) is the Ketosynthase family 3 (KS3) 2 domain. Catalysis depends on for beta-ketoacyl synthase 2 activity residues C1529, H1664, and H1704. The interval 1967-2099 (AREPGARERA…GVVDELNEPA (133 aa)) is N-terminal hotdog fold 1. In terms of domain architecture, PKS/mFAS DH 1 spans 1967–2261 (AREPGARERA…SARWRKLAGA (295 aa)). H1999 serves as the catalytic Proton acceptor; for dehydratase activity 1. The segment at 2113–2261 (AGERVDGAAL…SARWRKLAGA (149 aa)) is C-terminal hotdog fold 1. Catalysis depends on D2175, which acts as the Proton donor; for dehydratase activity 1. The interval 2426–2446 (DADEDDRDGREPAGGPPLRDD) is disordered. A Carrier 2 domain is found at 2702–2780 (PAARVDLHAL…AIARALDASA (79 aa)). The segment at 2817–2836 (TPPDAGAPQRGAHAAAAEGS) is disordered. Residues 2822 to 2835 (GAPQRGAHAAAAEG) show a composition bias toward low complexity. Residues 2862 to 2935 (ARVGARLSAL…ELTDYFVRRH (74 aa)) form the Carrier 3 domain. S2896 is subject to O-(pantetheine 4'-phosphoryl)serine. In terms of domain architecture, Ketosynthase family 3 (KS3) 3 spans 3005–3430 (ADAIAVIGLA…GANAHVIVRE (426 aa)). Catalysis depends on for beta-ketoacyl synthase 3 activity residues C3175, H3310, and H3351. The disordered stretch occupies residues 3526–3546 (PGKKQLRGNGRARRGDAPPAG). The segment at 3621-3743 (HPMLDANRSE…GRSPSRAARG (123 aa)) is N-terminal hotdog fold 2. The region spanning 3621 to 3895 (HPMLDANRSE…SRAAASWRTA (275 aa)) is the PKS/mFAS DH 2 domain. The active-site Proton acceptor; for dehydratase activity 2 is H3650. Residues 3758–3895 (RAAPAFDADA…SRAAASWRTA (138 aa)) form a C-terminal hotdog fold 2 region. The active-site Proton donor; for dehydratase activity 2 is D3818. The tract at residues 3917 to 3942 (PAAESPSAATSTSAATSPAISTSAAT) is disordered. One can recognise a Carrier 4 domain in the interval 4840-4914 (TRTAALLRSL…ALAAYVGSQL (75 aa)). At S4874 the chain carries O-(pantetheine 4'-phosphoryl)serine. The interval 4960–4992 (APRARTGADAPDTSLASSASSISSARASSPASP) is disordered. The region spanning 4998–5424 (SFDVAIVGAS…GVNAHVVLEE (427 aa)) is the Ketosynthase family 3 (KS3) 4 domain. Active-site for beta-ketoacyl synthase 4 activity residues include C5158, H5293, and H5339. In terms of domain architecture, Carrier 5 spans 5470–5544 (ARIEAVIRDA…ALRDHVAERI (75 aa)). S5504 is subject to O-(pantetheine 4'-phosphoryl)serine. Positions 5573-5603 (VSEATEASDASEASDASEASEASEASEASKA) are disordered.

Requires pantetheine 4'-phosphate as cofactor.

It is found in the cytoplasm. It participates in antibiotic biosynthesis. Its function is as follows. Involved in production of the polyketide antibiotic thailandamide. This is Polyketide synthase ThaG from Burkholderia thailandensis (strain ATCC 700388 / DSM 13276 / CCUG 48851 / CIP 106301 / E264).